Here is a 461-residue protein sequence, read N- to C-terminus: tRNA modification GTPase MnmE (461 aa).

(6S)-5-formyl-5,6,7,8-tetrahydrofolate is bound by residues R27, E89, and R128. The region spanning 224–382 is the TrmE-type G domain; it reads GLATAIVGQP…LEELINKLFF (159 aa). N234 serves as a coordination point for K(+). Residues 234–239, 253–259, and 278–281 contribute to the GTP site; these read NVGKSS, TDVAGTT, and DTAG. Residue S238 coordinates Mg(2+). Positions 253, 255, and 258 each coordinate K(+). T259 contributes to the Mg(2+) binding site. K461 provides a ligand contact to (6S)-5-formyl-5,6,7,8-tetrahydrofolate.

Belongs to the TRAFAC class TrmE-Era-EngA-EngB-Septin-like GTPase superfamily. TrmE GTPase family. As to quaternary structure, homodimer. Heterotetramer of two MnmE and two MnmG subunits. The cofactor is K(+).

The protein localises to the cytoplasm. Its function is as follows. Exhibits a very high intrinsic GTPase hydrolysis rate. Involved in the addition of a carboxymethylaminomethyl (cmnm) group at the wobble position (U34) of certain tRNAs, forming tRNA-cmnm(5)s(2)U34. The protein is tRNA modification GTPase MnmE of Lactobacillus acidophilus (strain ATCC 700396 / NCK56 / N2 / NCFM).